Reading from the N-terminus, the 211-residue chain is Large ribosomal subunit protein uL4 (211 aa).

Positions 44–90 (ERQGTHSTLTKGEVRGGGKKPWRQKHTGKARTGSTRNPHWTGGGVVF) are disordered. Residues 60–72 (GGKKPWRQKHTGK) are compositionally biased toward basic residues.

This sequence belongs to the universal ribosomal protein uL4 family. As to quaternary structure, part of the 50S ribosomal subunit.

In terms of biological role, one of the primary rRNA binding proteins, this protein initially binds near the 5'-end of the 23S rRNA. It is important during the early stages of 50S assembly. It makes multiple contacts with different domains of the 23S rRNA in the assembled 50S subunit and ribosome. Functionally, forms part of the polypeptide exit tunnel. The polypeptide is Large ribosomal subunit protein uL4 (Ureaplasma urealyticum serovar 10 (strain ATCC 33699 / Western)).